The following is a 345-amino-acid chain: Type II restriction enzyme HgiCI (345 aa).

It catalyses the reaction Endonucleolytic cleavage of DNA to give specific double-stranded fragments with terminal 5'-phosphates.. Functionally, a P subtype restriction enzyme that recognizes the double-stranded sequence 5'-GGYRCC-3' and cleaves after G-1. In Herpetosiphon aurantiacus (Herpetosiphon giganteus), this protein is Type II restriction enzyme HgiCI (hgiCIR).